We begin with the raw amino-acid sequence, 111 residues long: Putative lipid-binding protein AIR1 (111 aa).

The N-terminal stretch at 1–23 (MAPRTPLALFVSLNLLFFTYTSA) is a signal peptide. 3 disulfides stabilise this stretch: Cys-28/Cys-58, Cys-38/Cys-57, and Cys-74/Cys-110.

The protein belongs to the plant LTP family. PEARLI1 subfamily.

The protein resides in the secreted. The sequence is that of Putative lipid-binding protein AIR1 (AIR1) from Arabidopsis thaliana (Mouse-ear cress).